A 320-amino-acid polypeptide reads, in one-letter code: Ferrochelatase (320 aa).

Fe cation is bound by residues H194 and E275.

The protein belongs to the ferrochelatase family. As to quaternary structure, monomer.

It localises to the cytoplasm. It carries out the reaction heme b + 2 H(+) = protoporphyrin IX + Fe(2+). The protein operates within porphyrin-containing compound metabolism; protoheme biosynthesis; protoheme from protoporphyrin-IX: step 1/1. Functionally, catalyzes the ferrous insertion into protoporphyrin IX. In Escherichia coli O8 (strain IAI1), this protein is Ferrochelatase.